The following is a 274-amino-acid chain: Orotidine 5'-phosphate decarboxylase (274 aa).

Residues 1 to 15 show a composition bias toward low complexity; sequence MSAGRRSSGGRSAAA. The interval 1–21 is disordered; it reads MSAGRRSSGGRSAAAPRFTPP. Residues aspartate 32, lysine 54, 99 to 108, threonine 154, arginine 215, glutamine 224, glycine 244, and arginine 245 contribute to the substrate site; that span reads DLKLHDIPAT. Lysine 101 (proton donor) is an active-site residue.

This sequence belongs to the OMP decarboxylase family. Type 1 subfamily. As to quaternary structure, homodimer.

The catalysed reaction is orotidine 5'-phosphate + H(+) = UMP + CO2. Its pathway is pyrimidine metabolism; UMP biosynthesis via de novo pathway; UMP from orotate: step 2/2. Catalyzes the decarboxylation of orotidine 5'-monophosphate (OMP) to uridine 5'-monophosphate (UMP). This chain is Orotidine 5'-phosphate decarboxylase, found in Frankia casuarinae (strain DSM 45818 / CECT 9043 / HFP020203 / CcI3).